The following is a 340-amino-acid chain: Ketol-acid reductoisomerase (NADP(+)) (340 aa).

The KARI N-terminal Rossmann domain maps to 1–183 (MAITVYYDKD…GGGRTGIIET (183 aa)). NADP(+) contacts are provided by residues 26–29 (FGSQ), R49, S52, S54, and 84–87 (DEIQ). The active site involves H109. Residue G135 coordinates NADP(+). One can recognise a KARI C-terminal knotted domain in the interval 184–329 (TFKAETETDL…RNLRAMMPWI (146 aa)). Positions 192, 196, 228, and 232 each coordinate Mg(2+). S253 contributes to the substrate binding site.

This sequence belongs to the ketol-acid reductoisomerase family. It depends on Mg(2+) as a cofactor.

It carries out the reaction (2R)-2,3-dihydroxy-3-methylbutanoate + NADP(+) = (2S)-2-acetolactate + NADPH + H(+). The catalysed reaction is (2R,3R)-2,3-dihydroxy-3-methylpentanoate + NADP(+) = (S)-2-ethyl-2-hydroxy-3-oxobutanoate + NADPH + H(+). The protein operates within amino-acid biosynthesis; L-isoleucine biosynthesis; L-isoleucine from 2-oxobutanoate: step 2/4. It functions in the pathway amino-acid biosynthesis; L-valine biosynthesis; L-valine from pyruvate: step 2/4. Functionally, involved in the biosynthesis of branched-chain amino acids (BCAA). Catalyzes an alkyl-migration followed by a ketol-acid reduction of (S)-2-acetolactate (S2AL) to yield (R)-2,3-dihydroxy-isovalerate. In the isomerase reaction, S2AL is rearranged via a Mg-dependent methyl migration to produce 3-hydroxy-3-methyl-2-ketobutyrate (HMKB). In the reductase reaction, this 2-ketoacid undergoes a metal-dependent reduction by NADPH to yield (R)-2,3-dihydroxy-isovalerate. This chain is Ketol-acid reductoisomerase (NADP(+)), found in Campylobacter jejuni (strain RM1221).